The following is a 357-amino-acid chain: tRNA/tmRNA (uracil-C(5))-methyltransferase (357 aa).

S-adenosyl-L-methionine contacts are provided by glutamine 180, tyrosine 209, asparagine 214, glutamate 230, and aspartate 290. Cysteine 315 serves as the catalytic Nucleophile. Glutamate 349 functions as the Proton acceptor in the catalytic mechanism.

Belongs to the class I-like SAM-binding methyltransferase superfamily. RNA M5U methyltransferase family. TrmA subfamily.

The enzyme catalyses uridine(54) in tRNA + S-adenosyl-L-methionine = 5-methyluridine(54) in tRNA + S-adenosyl-L-homocysteine + H(+). It carries out the reaction uridine(341) in tmRNA + S-adenosyl-L-methionine = 5-methyluridine(341) in tmRNA + S-adenosyl-L-homocysteine + H(+). In terms of biological role, dual-specificity methyltransferase that catalyzes the formation of 5-methyluridine at position 54 (m5U54) in all tRNAs, and that of position 341 (m5U341) in tmRNA (transfer-mRNA). The chain is tRNA/tmRNA (uracil-C(5))-methyltransferase from Campylobacter jejuni subsp. jejuni serotype O:2 (strain ATCC 700819 / NCTC 11168).